Here is a 320-residue protein sequence, read N- to C-terminus: Sensor histidine kinase YbdK (320 aa).

The chain crosses the membrane as a helical span at residues 1-21; the sequence is MLLFTAVISVPMLLLAVSVLM. The Extracellular portion of the chain corresponds to 22–41; sequence SVIYDSMFKPMNHGMPFHRS. Residues 42 to 62 form a helical membrane-spanning segment; sequence FAYPAMIVVFLISLLLLAFLF. The Cytoplasmic portion of the chain corresponds to 63–320; it reads SKSIHSLLHK…NGTGFLFSKE (258 aa). One can recognise an HAMP domain in the interval 67–120; it reads HSLLHKINLLNQTIRHLASDQRVPDKIEVKRADEIGELIKSVNLLIERTTYREL. The 186-residue stretch at 135 to 320 folds into the Histidine kinase domain; it reads KLRHDINTPL…NGTGFLFSKE (186 aa). At H138 the chain carries Phosphohistidine; by autocatalysis.

The protein localises to the cell membrane. The catalysed reaction is ATP + protein L-histidine = ADP + protein N-phospho-L-histidine.. Its function is as follows. Member of the two-component regulatory system YbdK/YbdJ. Probably activates YbdJ by phosphorylation. The polypeptide is Sensor histidine kinase YbdK (ybdK) (Bacillus subtilis (strain 168)).